The chain runs to 1174 residues: Probable pyruvate-flavodoxin oxidoreductase (1174 aa).

2 consecutive 4Fe-4S ferredoxin-type domains span residues 680-709 (EIPI…AKVV) and 736-765 (YVLQ…NPEI). [4Fe-4S] cluster contacts are provided by Cys689, Cys692, Cys695, Cys699, Cys745, Cys748, Cys751, Cys755, Cys819, Cys822, Cys847, and Cys1071.

This sequence belongs to the pyruvate:ferredoxin/flavodoxin oxidoreductase family. [4Fe-4S] cluster serves as cofactor.

It catalyses the reaction oxidized [flavodoxin] + pyruvate + CoA + 2 H(+) = reduced [flavodoxin] + acetyl-CoA + CO2. Oxidoreductase required for the transfer of electrons from pyruvate to flavodoxin. The sequence is that of Probable pyruvate-flavodoxin oxidoreductase (ydbK) from Escherichia coli (strain K12).